The sequence spans 197 residues: Protein GrpE (197 aa).

Over residues 1 to 31 (MSDDTKKQDTAADAEVEKEMEGVPEHLRDDR) the composition is skewed to basic and acidic residues. Residues 1 to 48 (MSDDTKKQDTAADAEVEKEMEGVPEHLRDDRGSEEDASDDLSAALESL) are disordered.

This sequence belongs to the GrpE family. As to quaternary structure, homodimer.

The protein localises to the cytoplasm. Functionally, participates actively in the response to hyperosmotic and heat shock by preventing the aggregation of stress-denatured proteins, in association with DnaK and GrpE. It is the nucleotide exchange factor for DnaK and may function as a thermosensor. Unfolded proteins bind initially to DnaJ; upon interaction with the DnaJ-bound protein, DnaK hydrolyzes its bound ATP, resulting in the formation of a stable complex. GrpE releases ADP from DnaK; ATP binding to DnaK triggers the release of the substrate protein, thus completing the reaction cycle. Several rounds of ATP-dependent interactions between DnaJ, DnaK and GrpE are required for fully efficient folding. In Erythrobacter litoralis (strain HTCC2594), this protein is Protein GrpE.